A 280-amino-acid polypeptide reads, in one-letter code: MKVIKTLSIINFFIFVTFNIKNGSKYSNTFINNAYNMSIRRSMANEGSNTKSVGANAPKADTIASGSQSSTNSASTSTTNNGESQTTTPTAADTPTATESNSRSPPITTTESNSRSPPITTTESNSRSPPITTTESNSRSPPITTTESNSRSPPITTTESSSSGNAPNKTDGKGEESEKQNELNESTEEGPKAPQEPQTAENENPAAPENKGTGQHGHMHGSRNNHPQNTSDSQKECTDGNKENCGAATSLLNNSSNIASINKFVVLISATLVLSFAIFI.

An N-terminal signal peptide occupies residues Met-1–Ile-20. Residues Asn-22 and Asn-36 are each glycosylated (N-linked (GlcNAc...) asparagine). The segment at Ala-44–Ala-206 is polymorphic region. The segment at Gly-47–Lys-242 is disordered. A 5 X 12 AA tandem repeats of P-P-I-T-T-T-E-S-N-S-R-S region spans residues Lys-51–Ala-74. The span at Ala-64–Thr-98 shows a compositional bias: low complexity. The span at Glu-99–Asn-149 shows a compositional bias: polar residues. 4 tandem repeats follow at residues Pro-105–Ser-116, Pro-117–Ser-128, Pro-129–Ser-140, and Pro-141–Ser-152. The segment covering Ser-150–Ser-163 has biased composition (low complexity). A 5; partial repeat occupies Pro-153–Ser-160. Residue Asn-168 is glycosylated (N-linked (GlcNAc...) asparagine). Positions Thr-170–Glu-182 are enriched in basic and acidic residues. 2 N-linked (GlcNAc...) asparagine glycosylation sites follow: Asn-184 and Asn-229. Over residues Ser-233–Lys-242 the composition is skewed to basic and acidic residues. Cys-237 and Cys-245 form a disulfide bridge. Asn-253 and Asn-254 each carry an N-linked (GlcNAc...) asparagine glycan. Asn-254 carries the GPI-anchor amidated asparagine lipid modification. Positions Ser-255–Ile-280 are cleaved as a propeptide — removed in mature form.

It localises to the cell membrane. In terms of biological role, may play a role in the merozoite attachment to the erythrocyte. This chain is Merozoite surface protein 2, found in Plasmodium falciparum (isolate K1 / Thailand).